A 938-amino-acid chain; its full sequence is Collagen alpha-1(I) chain (938 aa).

The disordered stretch occupies residues G1 to P938. A 4-hydroxyproline mark is found at P18, P21, P24, P33, P36, P39, P54, P69, P75, P84, and P90. Positions P26 to M45 are enriched in low complexity. Over residues N57–E71 the composition is skewed to basic and acidic residues. K93 carries the 5-hydroxylysine; alternate modification. Residue K93 is glycosylated (O-linked (Gal...) hydroxylysine; alternate). A Phosphoserine modification is found at S99. Residues D107 to A135 show a composition bias toward low complexity. P117, P138, P147, P150, P177, P180, P192, P198, P207, P213, P216, and P231 each carry 4-hydroxyproline. Residues P137–F149 are compositionally biased toward pro residues. Residues A183 to S222 are compositionally biased toward low complexity. The residue at position 234 (K234) is a 5-hydroxylysine. Residues P240, P243, P255, P264, P279, P285, P294, and P300 each carry the 4-hydroxyproline modification. Residues G289–G298 are compositionally biased toward gly residues. The residue at position 309 (K309) is a 5-hydroxylysine. 25 positions are modified to 4-hydroxyproline: P314, P323, P329, P335, P344, P347, P356, P365, P371, P383, P392, P401, P404, P422, P439, P445, P451, P458, P464, P476, P485, P497, P503, P509, and P518. A compositionally biased stretch (low complexity) spans K338 to R364. The span at A373–P392 shows a compositional bias: low complexity. At K530 the chain carries 5-hydroxylysine. 4-hydroxyproline is present on residues P536, P551, and P557. Positions S563 to A577 are enriched in low complexity. S566 bears the Phosphoserine mark. Residues P578, P584, P587, P596, P602, P620, P629, and P638 each carry the 4-hydroxyproline modification. The span at A590–A617 shows a compositional bias: low complexity. A compositionally biased stretch (pro residues) spans P619–P631. K641 bears the 5-hydroxylysine mark. Residues S646–V662 are compositionally biased toward low complexity. A 4-hydroxyproline mark is found at P650 and P656. At P664 the chain carries 3-hydroxyproline. 4-hydroxyproline occurs at positions 665, 674, 677, 693, 703, 712, 730, 739, 742, 748, 763, 769, 775, 784, and 790. Residues P762–A772 show a composition bias toward pro residues. A 5-hydroxylysine modification is found at K799. Residues P807–V822 are compositionally biased toward pro residues. P810, P813, and P816 each carry 4-hydroxyproline. A compositionally biased stretch (low complexity) spans A843 to P867. 4-hydroxyproline occurs at positions 871, 874, 892, and 907. Low complexity predominate over residues P874 to P907. Position 912 is a 3-hydroxyproline (P912). P913 is modified (4-hydroxyproline). A compositionally biased stretch (pro residues) spans V923–P938. P925 carries the 3-hydroxyproline modification. P926 bears the 4-hydroxyproline mark. P928 is subject to 3-hydroxyproline. P929 is subject to 4-hydroxyproline. P931 carries the 3-hydroxyproline modification. 3 positions are modified to 4-hydroxyproline: P932, P935, and P938.

The protein belongs to the fibrillar collagen family. Trimers of one alpha 2(I) and two alpha 1(I) chains. In terms of processing, contains mostly 4-hydroxyproline. Proline residues at the third position of the tripeptide repeating unit (G-X-Y) are hydroxylated in some or all of the chains. Post-translationally, contains 3-hydroxyproline at a few sites. This modification occurs on the first proline residue in the sequence motif Gly-Pro-Hyp, where Hyp is 4-hydroxyproline. Lysine residues at the third position of the tripeptide repeating unit (G-X-Y) are 5-hydroxylated in some or all of the chains. In terms of processing, O-glycosylated on hydroxylated lysine residues. The O-linked glycan consists of a Glc-Gal disaccharide. In terms of tissue distribution, expressed in bones.

The protein resides in the secreted. It localises to the extracellular space. Its subcellular location is the extracellular matrix. Its function is as follows. Type I collagen is a member of group I collagen (fibrillar forming collagen). This chain is Collagen alpha-1(I) chain, found in Megalonyx jeffersonii (Jefferson's ground sloth).